The sequence spans 223 residues: Putative 3-methyladenine DNA glycosylase (223 aa).

Belongs to the DNA glycosylase MPG family.

The protein is Putative 3-methyladenine DNA glycosylase of Rickettsia typhi (strain ATCC VR-144 / Wilmington).